The chain runs to 167 residues: uncharacterized protein (167 aa).

This is an uncharacterized protein from Mycobacterium tuberculosis (strain CDC 1551 / Oshkosh).